The chain runs to 238 residues: 2,3,4,5-tetrahydropyridine-2,6-dicarboxylate N-acetyltransferase (238 aa).

The protein belongs to the transferase hexapeptide repeat family. DapH subfamily.

It catalyses the reaction (S)-2,3,4,5-tetrahydrodipicolinate + acetyl-CoA + H2O = L-2-acetamido-6-oxoheptanedioate + CoA. The protein operates within amino-acid biosynthesis; L-lysine biosynthesis via DAP pathway; LL-2,6-diaminopimelate from (S)-tetrahydrodipicolinate (acetylase route): step 1/3. Functionally, catalyzes the transfer of an acetyl group from acetyl-CoA to tetrahydrodipicolinate. This Pseudothermotoga lettingae (strain ATCC BAA-301 / DSM 14385 / NBRC 107922 / TMO) (Thermotoga lettingae) protein is 2,3,4,5-tetrahydropyridine-2,6-dicarboxylate N-acetyltransferase.